We begin with the raw amino-acid sequence, 167 residues long: uncharacterized protein (167 aa).

This is an uncharacterized protein from Sus scrofa (Pig).